A 328-amino-acid polypeptide reads, in one-letter code: Tetraacyldisaccharide 4'-kinase (328 aa).

55-62 (TAGGNGKT) lines the ATP pocket.

This sequence belongs to the LpxK family.

It catalyses the reaction a lipid A disaccharide + ATP = a lipid IVA + ADP + H(+). Its pathway is glycolipid biosynthesis; lipid IV(A) biosynthesis; lipid IV(A) from (3R)-3-hydroxytetradecanoyl-[acyl-carrier-protein] and UDP-N-acetyl-alpha-D-glucosamine: step 6/6. Its function is as follows. Transfers the gamma-phosphate of ATP to the 4'-position of a tetraacyldisaccharide 1-phosphate intermediate (termed DS-1-P) to form tetraacyldisaccharide 1,4'-bis-phosphate (lipid IVA). This Escherichia coli O157:H7 protein is Tetraacyldisaccharide 4'-kinase.